The primary structure comprises 204 residues: Protein GrpE (204 aa).

Positions 1–42 (MTDETAKNGPDAAADAQIEPQVQEETNSTAEDAGQDNNPTAA) are disordered. Polar residues predominate over residues 23–41 (QEETNSTAEDAGQDNNPTA).

The protein belongs to the GrpE family. Homodimer.

It localises to the cytoplasm. In terms of biological role, participates actively in the response to hyperosmotic and heat shock by preventing the aggregation of stress-denatured proteins, in association with DnaK and GrpE. It is the nucleotide exchange factor for DnaK and may function as a thermosensor. Unfolded proteins bind initially to DnaJ; upon interaction with the DnaJ-bound protein, DnaK hydrolyzes its bound ATP, resulting in the formation of a stable complex. GrpE releases ADP from DnaK; ATP binding to DnaK triggers the release of the substrate protein, thus completing the reaction cycle. Several rounds of ATP-dependent interactions between DnaJ, DnaK and GrpE are required for fully efficient folding. This chain is Protein GrpE, found in Allorhizobium ampelinum (strain ATCC BAA-846 / DSM 112012 / S4) (Agrobacterium vitis (strain S4)).